The sequence spans 359 residues: Phosphate acyltransferase (359 aa).

It belongs to the PlsX family. Homodimer. Probably interacts with PlsY.

Its subcellular location is the cytoplasm. The catalysed reaction is a fatty acyl-[ACP] + phosphate = an acyl phosphate + holo-[ACP]. It functions in the pathway lipid metabolism; phospholipid metabolism. Catalyzes the reversible formation of acyl-phosphate (acyl-PO(4)) from acyl-[acyl-carrier-protein] (acyl-ACP). This enzyme utilizes acyl-ACP as fatty acyl donor, but not acyl-CoA. This is Phosphate acyltransferase from Salmonella agona (strain SL483).